Consider the following 340-residue polypeptide: MIKVAVNGYGTIGKRVASAILAQPDMTLVGVSKTSPNYEAYQAQKMGINLYVTKESLKEFEEAGIKVKGVLEDMIKEADVVVDATPNGVGAQYKQVYSSMGKRALFQGGEKANVADVSFSALCNYDEAVDKRYVRVVSCNTTGLLRTLCTLNRVSKIAKVRGTIVRRAADPKEVKKGPINSLVPDPASIPSHHAKDVNTVLKDLDIVTMAVVAPTTLMHVHLLDVTVSSPVTKEDVLSVLSSTPRILLASGKSKVSSTAEIVEVARDMGRPRNDLYELVVFEDSVSVRGNEVFLMYAVHQESIVVPENVDAIRAVSGFADGRKSIEMTNASMGIGKGYLV.

Residues 11-12 (TI) and Gly109 each bind NAD(+). Residue 138–140 (SCN) coordinates D-glyceraldehyde 3-phosphate. The active-site Nucleophile is the Cys139. Position 167 (Arg167) interacts with NAD(+). 193–194 (HA) is a binding site for D-glyceraldehyde 3-phosphate. Gln300 provides a ligand contact to NAD(+).

The protein belongs to the glyceraldehyde-3-phosphate dehydrogenase family. Homotetramer.

It is found in the cytoplasm. It carries out the reaction D-glyceraldehyde 3-phosphate + phosphate + NADP(+) = (2R)-3-phospho-glyceroyl phosphate + NADPH + H(+). The catalysed reaction is D-glyceraldehyde 3-phosphate + phosphate + NAD(+) = (2R)-3-phospho-glyceroyl phosphate + NADH + H(+). It participates in carbohydrate degradation; glycolysis; pyruvate from D-glyceraldehyde 3-phosphate: step 1/5. This Metallosphaera sedula (strain ATCC 51363 / DSM 5348 / JCM 9185 / NBRC 15509 / TH2) protein is Glyceraldehyde-3-phosphate dehydrogenase.